The primary structure comprises 146 residues: Cytochrome c oxidase subunit 5A, mitochondrial (146 aa).

The transit peptide at 1–37 (MLAAALRRCTAAAAARGLLHPASAPSPAAAVCSIRCY) directs the protein to the mitochondrion. Positions 2–16 (LAAALRRCTAAAAAR) match the SIFI-degron motif. Residues Lys83 and Lys109 each carry the N6-acetyllysine modification. Thr137 carries the post-translational modification Phosphothreonine.

It belongs to the cytochrome c oxidase subunit 5A family. In terms of assembly, component of the cytochrome c oxidase (complex IV, CIV), a multisubunit enzyme composed of 14 subunits. The complex is composed of a catalytic core of 3 subunits MT-CO1, MT-CO2 and MT-CO3, encoded in the mitochondrial DNA, and 11 supernumerary subunits COX4I, COX5A, COX5B, COX6A, COX6B, COX6C, COX7A, COX7B, COX7C, COX8 and NDUFA4, which are encoded in the nuclear genome. The complex exists as a monomer or a dimer and forms supercomplexes (SCs) in the inner mitochondrial membrane with NADH-ubiquinone oxidoreductase (complex I, CI) and ubiquinol-cytochrome c oxidoreductase (cytochrome b-c1 complex, complex III, CIII), resulting in different assemblies (supercomplex SCI(1)III(2)IV(1) and megacomplex MCI(2)III(2)IV(2)). Interacts with AFG1L. Interacts with RAB5IF. Post-translationally, in response to mitochondrial stress, the precursor protein is ubiquitinated by the SIFI complex in the cytoplasm before mitochondrial import, leading to its degradation. Within the SIFI complex, UBR4 initiates ubiquitin chain that are further elongated or branched by KCMF1.

Its subcellular location is the mitochondrion inner membrane. It functions in the pathway energy metabolism; oxidative phosphorylation. Its function is as follows. Component of the cytochrome c oxidase, the last enzyme in the mitochondrial electron transport chain which drives oxidative phosphorylation. The respiratory chain contains 3 multisubunit complexes succinate dehydrogenase (complex II, CII), ubiquinol-cytochrome c oxidoreductase (cytochrome b-c1 complex, complex III, CIII) and cytochrome c oxidase (complex IV, CIV), that cooperate to transfer electrons derived from NADH and succinate to molecular oxygen, creating an electrochemical gradient over the inner membrane that drives transmembrane transport and the ATP synthase. Cytochrome c oxidase is the component of the respiratory chain that catalyzes the reduction of oxygen to water. Electrons originating from reduced cytochrome c in the intermembrane space (IMS) are transferred via the dinuclear copper A center (CU(A)) of subunit 2 and heme A of subunit 1 to the active site in subunit 1, a binuclear center (BNC) formed by heme A3 and copper B (CU(B)). The BNC reduces molecular oxygen to 2 water molecules using 4 electrons from cytochrome c in the IMS and 4 protons from the mitochondrial matrix. This is Cytochrome c oxidase subunit 5A, mitochondrial (Cox5a) from Mus musculus (Mouse).